The following is a 687-amino-acid chain: Tripartite terminase subunit 3 (687 aa).

The interval 67 to 91 (HHPATPTSANPDVGTPRPSEDNVPA) is disordered. The Walker A motif motif lies at 221–228 (IPRRHGKT). A Walker B motif motif is present at residues 316 to 321 (LLYVDE). Glu321 serves as the catalytic For ATPase activity. Residues Asp476, Glu550, and Asp662 each act as for nuclease activity in the active site.

This sequence belongs to the herpesviridae TRM3 protein family. As to quaternary structure, interacts with the terminase subunits TRM1 and TRM2. Interacts with portal protein.

It localises to the host nucleus. Component of the molecular motor that translocates viral genomic DNA in empty capsid during DNA packaging. Forms a tripartite terminase complex together with TRM1 and TRM2 in the host cytoplasm. Once the complex reaches the host nucleus, it interacts with the capsid portal vertex. This portal forms a ring in which genomic DNA is translocated into the capsid. TRM3 carries an RNase H-like nuclease activity that plays an important role for the cleavage of concatemeric viral DNA into unit length genomes. The chain is Tripartite terminase subunit 3 from Human herpesvirus 8 type P (isolate GK18) (HHV-8).